The following is a 431-amino-acid chain: Glucose-1-phosphate adenylyltransferase (431 aa).

Residues tyrosine 108, glycine 174, 189 to 190 (EK), and serine 207 contribute to the alpha-D-glucose 1-phosphate site.

It belongs to the bacterial/plant glucose-1-phosphate adenylyltransferase family. Homotetramer.

It carries out the reaction alpha-D-glucose 1-phosphate + ATP + H(+) = ADP-alpha-D-glucose + diphosphate. It functions in the pathway glycan biosynthesis; glycogen biosynthesis. Functionally, involved in the biosynthesis of ADP-glucose, a building block required for the elongation reactions to produce glycogen. Catalyzes the reaction between ATP and alpha-D-glucose 1-phosphate (G1P) to produce pyrophosphate and ADP-Glc. This chain is Glucose-1-phosphate adenylyltransferase, found in Actinobacillus succinogenes (strain ATCC 55618 / DSM 22257 / CCUG 43843 / 130Z).